Consider the following 339-residue polypeptide: Phenylalanine--tRNA ligase alpha subunit (339 aa).

Position 250 (E250) interacts with Mg(2+).

It belongs to the class-II aminoacyl-tRNA synthetase family. Phe-tRNA synthetase alpha subunit type 1 subfamily. In terms of assembly, tetramer of two alpha and two beta subunits. Mg(2+) serves as cofactor.

Its subcellular location is the cytoplasm. It catalyses the reaction tRNA(Phe) + L-phenylalanine + ATP = L-phenylalanyl-tRNA(Phe) + AMP + diphosphate + H(+). This Azobacteroides pseudotrichonymphae genomovar. CFP2 protein is Phenylalanine--tRNA ligase alpha subunit.